Reading from the N-terminus, the 692-residue chain is Elongation factor G (692 aa).

The region spanning 8–282 (ERTRNIGIMA…AIVYYLPSPV (275 aa)) is the tr-type G domain. Residues 17–24 (AHIDAGKT), 81–85 (DTPGH), and 135–138 (NKMD) each bind GTP.

The protein belongs to the TRAFAC class translation factor GTPase superfamily. Classic translation factor GTPase family. EF-G/EF-2 subfamily.

It localises to the cytoplasm. Its function is as follows. Catalyzes the GTP-dependent ribosomal translocation step during translation elongation. During this step, the ribosome changes from the pre-translocational (PRE) to the post-translocational (POST) state as the newly formed A-site-bound peptidyl-tRNA and P-site-bound deacylated tRNA move to the P and E sites, respectively. Catalyzes the coordinated movement of the two tRNA molecules, the mRNA and conformational changes in the ribosome. The sequence is that of Elongation factor G from Carboxydothermus hydrogenoformans (strain ATCC BAA-161 / DSM 6008 / Z-2901).